We begin with the raw amino-acid sequence, 396 residues long: Acetyl-CoA acetyltransferase ERG10, cytosolic (396 aa).

Cysteine 91 acts as the Acyl-thioester intermediate in catalysis. A K(+)-binding site is contributed by tyrosine 186. The CoA site is built by asparagine 227 and lysine 230. K(+) contacts are provided by alanine 246, proline 247, and valine 347. Catalysis depends on proton acceptor residues histidine 351 and cysteine 381. Asparagine 382 is a binding site for chloride.

The protein belongs to the thiolase-like superfamily. Thiolase family. Homotetramer. K(+) serves as cofactor.

The protein localises to the cytoplasm. Its subcellular location is the cytosol. It carries out the reaction 2 acetyl-CoA = acetoacetyl-CoA + CoA. It functions in the pathway metabolic intermediate biosynthesis; (R)-mevalonate biosynthesis; (R)-mevalonate from acetyl-CoA: step 1/3. In terms of biological role, acetyl-CoA acetyltransferase; part of the first module of ergosterol biosynthesis pathway that includes the early steps of the pathway, conserved across all eukaryotes, and which results in the formation of mevalonate from acetyl-coenzyme A (acetyl-CoA). ERG10B catalyzes the formation of acetoacetyl-CoA from acetyl-CoA. The first module starts with the action of the cytosolic acetyl-CoA acetyltransferase ERG10B that catalyzes the formation of acetoacetyl-CoA. The hydroxymethylglutaryl-CoA synthases ERG13 then condenses acetyl-CoA with acetoacetyl-CoA to form HMG-CoA. The rate-limiting step of the early module is the reduction to mevalonate by the 3-hydroxy-3-methylglutaryl-coenzyme A (HMG-CoA) reductases HMG1. The protein is Acetyl-CoA acetyltransferase ERG10, cytosolic of Gibberella zeae (strain ATCC MYA-4620 / CBS 123657 / FGSC 9075 / NRRL 31084 / PH-1) (Wheat head blight fungus).